The sequence spans 82 residues: Small ribosomal subunit protein bS18 (82 aa).

It belongs to the bacterial ribosomal protein bS18 family. In terms of assembly, part of the 30S ribosomal subunit. Forms a tight heterodimer with protein bS6.

Functionally, binds as a heterodimer with protein bS6 to the central domain of the 16S rRNA, where it helps stabilize the platform of the 30S subunit. The protein is Small ribosomal subunit protein bS18 of Chlamydia caviae (strain ATCC VR-813 / DSM 19441 / 03DC25 / GPIC) (Chlamydophila caviae).